We begin with the raw amino-acid sequence, 526 residues long: 2-isopropylmalate synthase (526 aa).

The 263-residue stretch at 5-267 (VIIFDTTLRD…HTGIRHQEIY (263 aa)) folds into the Pyruvate carboxyltransferase domain. Mn(2+) is bound by residues D14, H202, H204, and N238. Residues 393–526 (RLEYFSVQSG…VPSISTSSTH (134 aa)) are regulatory domain.

This sequence belongs to the alpha-IPM synthase/homocitrate synthase family. LeuA type 1 subfamily. Homodimer. Requires Mn(2+) as cofactor.

The protein localises to the cytoplasm. It carries out the reaction 3-methyl-2-oxobutanoate + acetyl-CoA + H2O = (2S)-2-isopropylmalate + CoA + H(+). It functions in the pathway amino-acid biosynthesis; L-leucine biosynthesis; L-leucine from 3-methyl-2-oxobutanoate: step 1/4. Catalyzes the condensation of the acetyl group of acetyl-CoA with 3-methyl-2-oxobutanoate (2-ketoisovalerate) to form 3-carboxy-3-hydroxy-4-methylpentanoate (2-isopropylmalate). The chain is 2-isopropylmalate synthase from Edwardsiella ictaluri (strain 93-146).